A 538-amino-acid polypeptide reads, in one-letter code: Solute carrier family 2, facilitated glucose transporter member 9 (538 aa).

Residues 1 to 34 (MDSRELALASLMCDTGGPGELSVGHQQRRTKKWS) lie on the Cytoplasmic side of the membrane. The residue at position 3 (serine 3) is a Phosphoserine. Residues 35–54 (FSLVVAALVGAFGSSFLYGY) form a helical membrane-spanning segment. Asparagine 55 and asparagine 71 each carry an N-linked (GlcNAc...) asparagine glycan. Over 55–88 (NLSVVNAPTPYIKAFYNGTWYRRHGQPIDPDTLT) the chain is Extracellular. Residues 89-109 (LLWSVTVSIFAIGGLVGTLMV) traverse the membrane as a helical segment. The Cytoplasmic portion of the chain corresponds to 110–120 (KMIGKFLGRKS). The chain crosses the membrane as a helical span at residues 121–143 (TLLVNNGFAISAALLMACSLRAG). Topologically, residues 144–148 (TFEML) are extracellular. Residues 149–170 (IVGRFIMGVDGGIALSALPMYL) form a helical membrane-spanning segment. The Cytoplasmic portion of the chain corresponds to 171–181 (NEISPKEIRGS). The chain crosses the membrane as a helical span at residues 182-200 (LGQVTAIFICIGVFSGQLL). The Extracellular segment spans residues 201 to 211 (GLPELLGREST). A helical transmembrane segment spans residues 212-233 (WPYLFGVIIVPALVQLASLPFL). The Cytoplasmic portion of the chain corresponds to 234–297 (PESPRYLLFE…LLRAPFVRWQ (64 aa)). Residues 298–319 (VITVIITMASYQLCGLNAIWFY) traverse the membrane as a helical segment. At 320–333 (TNSIFGKAGIPQDK) the chain is on the extracellular side. Residues 334-356 (IPYITLSTGGIETLAAIFSGLVI) traverse the membrane as a helical segment. At 357–362 (ERLGRR) the chain is on the cytoplasmic side. The chain crosses the membrane as a helical span at residues 363–385 (PLLIGGFGLMALFFGTLTATLTL). The Extracellular segment spans residues 386-390 (QDQAP). A helical membrane pass occupies residues 391 to 418 (WVPYLSIVCILAIIASFCSGPGGIPFIL). Topologically, residues 419–429 (TGEFFQQSERP) are cytoplasmic. A helical transmembrane segment spans residues 430 to 453 (AAFMIAGTVNWLSNFAVGLLFPFI). Residues 454–458 (QKSLD) are Extracellular-facing. A helical transmembrane segment spans residues 459 to 480 (SYCFLVFATICIAGATYFYFVL). Residues 481–538 (PETKNRTHAEISQAFAKRNKAQPPEVKADSAMTEEKANSQTEPDSSSTLDSYGQNKIV) lie on the Cytoplasmic side of the membrane. The interval 495–538 (FAKRNKAQPPEVKADSAMTEEKANSQTEPDSSSTLDSYGQNKIV) is disordered. The span at 518-538 (NSQTEPDSSSTLDSYGQNKIV) shows a compositional bias: polar residues.

Belongs to the major facilitator superfamily. Sugar transporter (TC 2.A.1.1) family. In terms of processing, N-glycosylated. In terms of tissue distribution, highly expressed in the intestine, with high expression in the jejunum and ileum, the segments of the intestine that perform the majority of urate excretion. Isoform 1: Widely expressed. Isoform 1: In kidney, expressed at low levels in proximal tubules. Isoform 2: Primarily expressed in liver and kidney; with specific expression in distal convoluted and connecting tubules of kidney.

It is found in the basolateral cell membrane. Its subcellular location is the apical cell membrane. The enzyme catalyses urate(out) = urate(in). High-capacity urate transporter, which may play a role in the urate reabsorption by proximal tubules. May have a residual high-affinity, low-capacity glucose and fructose transporter activity. Transports urate at rates 45- to 60-fold faster than glucose. Does not transport galactose. May mediate small uptake of adenine but not of other nucleobases. The protein is Solute carrier family 2, facilitated glucose transporter member 9 of Mus musculus (Mouse).